The following is a 552-amino-acid chain: Glutamine--tRNA ligase (552 aa).

The 'HIGH' region motif lies at 34–44; that stretch reads PEPNGYLHIGH. Residues 35–37 and 41–47 contribute to the ATP site; these read EPN and HIGHAKS. Residues aspartate 67 and tyrosine 212 each coordinate L-glutamine. ATP contacts are provided by residues threonine 231, 261 to 262, and 269 to 271; these read RL and MSK. Positions 268-272 match the 'KMSKS' region motif; that stretch reads IMSKR.

Belongs to the class-I aminoacyl-tRNA synthetase family. As to quaternary structure, monomer.

The protein resides in the cytoplasm. It catalyses the reaction tRNA(Gln) + L-glutamine + ATP = L-glutaminyl-tRNA(Gln) + AMP + diphosphate. The polypeptide is Glutamine--tRNA ligase (Aliivibrio salmonicida (strain LFI1238) (Vibrio salmonicida (strain LFI1238))).